A 138-amino-acid chain; its full sequence is Sporulation-specific cell division protein SsgB (138 aa).

The protein belongs to the SsgA family. As to quaternary structure, monomer. Interacts with SsgA. Interacts with FtsZ (via N-terminus).

It is found in the cell septum. Involved in sporulation-specific cell division. Required for early stages of sporulation. Important in the process of growth cessation prior to sporulation-specific cell division. Recruits cell division protein FtsZ to the future septum sites and tethers the contractile ring structure (Z ring) to the cytoplasmic membrane during sporulation. Stimulates polymerization and filament length of FtsZ in vitro. The polypeptide is Sporulation-specific cell division protein SsgB (Thermobifida fusca (strain YX)).